We begin with the raw amino-acid sequence, 141 residues long: Large ribosomal subunit protein uL16 (141 aa).

It belongs to the universal ribosomal protein uL16 family. In terms of assembly, part of the 50S ribosomal subunit.

In terms of biological role, binds 23S rRNA and is also seen to make contacts with the A and possibly P site tRNAs. The protein is Large ribosomal subunit protein uL16 of Deinococcus geothermalis (strain DSM 11300 / CIP 105573 / AG-3a).